Reading from the N-terminus, the 381-residue chain is Bifunctional polyhydroxybutyrate synthase / ABC transporter periplasmic binding protein (381 aa).

The signal sequence occupies residues 1-22 (MSKTFARSSLCALSMTIMTAHA).

Belongs to the bacterial solute-binding protein PotD/PotF family.

The protein localises to the periplasm. The catalysed reaction is (3R)-3-hydroxybutanoyl-CoA + [(3R)-hydroxybutanoate](n) = [(3R)-hydroxybutanoate](n+1) + CoA. Functionally, catalyzes the formation of short polymers of R-3-hydroxybutyrate (cPHB). Involved in natural transformation. Probably part of the ABC transporter complex YdcSTUV. During natural transformation, may bind dsDNA and convey it to the inner membrane channel formed by YdcV. This chain is Bifunctional polyhydroxybutyrate synthase / ABC transporter periplasmic binding protein (ydcS), found in Escherichia coli (strain K12).